A 177-amino-acid chain; its full sequence is MATIGIFFGSDTGQTRKVAKLIHQKLDGIADAPLDVRRATREQFLSYPVLLLGTPTLGDGELPGVEAGSQYDSWQEFTNTLSEADLTGKTVALFGLGDQLNYSKNFVSAMRILYDLVIARGACVVGNWPREGYKFSFSAALLENNEFVGLPLDQENQYDLTEERIDSWLEKLKPAVL.

Residues 4 to 173 (IGIFFGSDTG…RIDSWLEKLK (170 aa)) enclose the Flavodoxin-like domain.

It belongs to the flavodoxin family. FMN is required as a cofactor.

Its function is as follows. Low-potential electron donor to a number of redox enzymes. NifF is the electron donor to nitrogenase. This is Flavodoxin (nifF) from Enterobacter agglomerans (Erwinia herbicola).